We begin with the raw amino-acid sequence, 178 residues long: ATP-dependent protease subunit HslV (178 aa).

Thr8 is an active-site residue. Residues Gly163, Cys166, and Thr169 each coordinate Na(+).

It belongs to the peptidase T1B family. HslV subfamily. As to quaternary structure, a double ring-shaped homohexamer of HslV is capped on each side by a ring-shaped HslU homohexamer. The assembly of the HslU/HslV complex is dependent on binding of ATP.

It is found in the cytoplasm. The catalysed reaction is ATP-dependent cleavage of peptide bonds with broad specificity.. Its activity is regulated as follows. Allosterically activated by HslU binding. Protease subunit of a proteasome-like degradation complex believed to be a general protein degrading machinery. In Xylella fastidiosa (strain 9a5c), this protein is ATP-dependent protease subunit HslV.